Reading from the N-terminus, the 333-residue chain is Biotin synthase (333 aa).

Positions 47 to 273 (YYGNKVKLNM…MNPTKEIRIA (227 aa)) constitute a Radical SAM core domain. Positions 65, 69, and 72 each coordinate [4Fe-4S] cluster. C109, C141, C201, and R271 together coordinate [2Fe-2S] cluster.

The protein belongs to the radical SAM superfamily. Biotin synthase family. As to quaternary structure, homodimer. Requires [4Fe-4S] cluster as cofactor. It depends on [2Fe-2S] cluster as a cofactor.

It catalyses the reaction (4R,5S)-dethiobiotin + (sulfur carrier)-SH + 2 reduced [2Fe-2S]-[ferredoxin] + 2 S-adenosyl-L-methionine = (sulfur carrier)-H + biotin + 2 5'-deoxyadenosine + 2 L-methionine + 2 oxidized [2Fe-2S]-[ferredoxin]. Its pathway is cofactor biosynthesis; biotin biosynthesis; biotin from 7,8-diaminononanoate: step 2/2. In terms of biological role, catalyzes the conversion of dethiobiotin (DTB) to biotin by the insertion of a sulfur atom into dethiobiotin via a radical-based mechanism. This chain is Biotin synthase, found in Geobacillus kaustophilus (strain HTA426).